The sequence spans 1071 residues: ATP-dependent helicase/deoxyribonuclease subunit B (1071 aa).

This sequence belongs to the helicase family. AddB/RexB type 2 subfamily. Heterodimer of AddA and RexB. Requires Mg(2+) as cofactor.

Its function is as follows. The heterodimer acts as both an ATP-dependent DNA helicase and an ATP-dependent, dual-direction single-stranded exonuclease. Recognizes the chi site generating a DNA molecule suitable for the initiation of homologous recombination. This subunit has 5' -&gt; 3' nuclease activity but not helicase activity. The protein is ATP-dependent helicase/deoxyribonuclease subunit B of Streptococcus pyogenes serotype M28 (strain MGAS6180).